The following is a 206-amino-acid chain: Large ribosomal subunit protein uL4 (206 aa).

The tract at residues 48–97 (THAVKNRSLVSGGGKKPWKQKHTGRARQGSTRASQWVGGGKAMGPKPRDY) is disordered. Residues 63-72 (KPWKQKHTGR) show a composition bias toward basic residues.

The protein belongs to the universal ribosomal protein uL4 family. In terms of assembly, part of the 50S ribosomal subunit.

In terms of biological role, one of the primary rRNA binding proteins, this protein initially binds near the 5'-end of the 23S rRNA. It is important during the early stages of 50S assembly. It makes multiple contacts with different domains of the 23S rRNA in the assembled 50S subunit and ribosome. Forms part of the polypeptide exit tunnel. This chain is Large ribosomal subunit protein uL4, found in Anaeromyxobacter sp. (strain K).